Reading from the N-terminus, the 83-residue chain is Mu-conotoxin-like PnMKLT1-014 (83 aa).

Positions 1–22 are cleaved as a signal peptide; it reads MNLTCMMIVAVLFLTAWTFVMA. A propeptide spanning residues 23-50 is cleaved from the precursor; sequence DDSNNGLANLFSKSRYEMEDPEPSKLEK. 3 cysteine pairs are disulfide-bonded: cysteine 54-cysteine 72, cysteine 61-cysteine 77, and cysteine 71-cysteine 82.

This sequence belongs to the conotoxin O1 superfamily. Expressed by the venom duct.

Its subcellular location is the secreted. Functionally, mu-conotoxins block voltage-gated sodium channels (Nav). The sequence is that of Mu-conotoxin-like PnMKLT1-014 from Conus pennaceus (Feathered cone).